The primary structure comprises 248 residues: 1-(5-phosphoribosyl)-5-[(5-phosphoribosylamino)methylideneamino] imidazole-4-carboxamide isomerase (248 aa).

Asp8 (proton acceptor) is an active-site residue. Asp130 serves as the catalytic Proton donor.

It belongs to the HisA/HisF family.

The protein resides in the cytoplasm. The catalysed reaction is 1-(5-phospho-beta-D-ribosyl)-5-[(5-phospho-beta-D-ribosylamino)methylideneamino]imidazole-4-carboxamide = 5-[(5-phospho-1-deoxy-D-ribulos-1-ylimino)methylamino]-1-(5-phospho-beta-D-ribosyl)imidazole-4-carboxamide. It functions in the pathway amino-acid biosynthesis; L-histidine biosynthesis; L-histidine from 5-phospho-alpha-D-ribose 1-diphosphate: step 4/9. This chain is 1-(5-phosphoribosyl)-5-[(5-phosphoribosylamino)methylideneamino] imidazole-4-carboxamide isomerase, found in Alkalilimnicola ehrlichii (strain ATCC BAA-1101 / DSM 17681 / MLHE-1).